The chain runs to 764 residues: Acylamino-acid-releasing enzyme (764 aa).

Catalysis depends on charge relay system residues serine 618, aspartate 707, and histidine 739.

This sequence belongs to the peptidase S9C family. Homotetramer.

The protein resides in the cytoplasm. It localises to the nucleus. It catalyses the reaction Cleavage of an N-acetyl or N-formyl amino acid from the N-terminus of a polypeptide.. With respect to regulation, strongly inhibited by the serine protease inhibitor diisopropyl fluorophosphate. Functionally, catalyzes the hydrolysis of the N-terminal peptide bond of an N-acetylated peptide to generate an N-acetylated amino acid and a peptide with a free N-terminus. Can degrade the glycated RuBisCO (ribulose-1,5-bisphosphate carboxylase/oxygenase) protein but not the native protein. May be involved in the elimination of glycated proteins. Plays a homeostatic role in sustaining the cytoplasmic antioxidative system. May contribute to the elimination of the oxidized proteins in the cytoplasm. The chain is Acylamino-acid-releasing enzyme from Arabidopsis thaliana (Mouse-ear cress).